A 397-amino-acid chain; its full sequence is Pyruvate dehydrogenase E1 component subunit alpha, mitochondrial (397 aa).

H98, Y124, R125, G173, V175, D204, G205, A206, N233, and Y235 together coordinate pyruvate. Thiamine diphosphate-binding residues include Y124, R125, G173, V175, D204, G205, A206, and N233. D204 serves as a coordination point for Mg(2+). Mg(2+) contacts are provided by N233 and Y235. H299 contacts thiamine diphosphate.

Tetramer of 2 alpha and 2 beta subunits. Thiamine diphosphate is required as a cofactor. It depends on Mg(2+) as a cofactor.

It is found in the mitochondrion matrix. The enzyme catalyses N(6)-[(R)-lipoyl]-L-lysyl-[protein] + pyruvate + H(+) = N(6)-[(R)-S(8)-acetyldihydrolipoyl]-L-lysyl-[protein] + CO2. E1 activity is regulated by phosphorylation (inactivation) and dephosphorylation (activation) of the alpha subunit. Functionally, the pyruvate dehydrogenase complex catalyzes the overall conversion of pyruvate to acetyl-CoA and CO(2). It contains multiple copies of three enzymatic components: pyruvate dehydrogenase (E1), dihydrolipoamide acetyltransferase (E2) and lipoamide dehydrogenase (E3). The protein is Pyruvate dehydrogenase E1 component subunit alpha, mitochondrial of Pisum sativum (Garden pea).